The primary structure comprises 231 residues: Ion-translocating oxidoreductase complex subunit E (231 aa).

The next 6 helical transmembrane spans lie at 18 to 38, 39 to 59, 69 to 89, 93 to 113, 128 to 148, and 182 to 202; these read GLVQLLGLCPLLAVTATVTNA, LGLGFATLLVLVGSNMLVSLV, IPVFVMIIAALVTSVQLLINA, GLYLSLGIFLPLIVTNCVIIG, AFDGLMMGIGFTCVLVVLGAG, and PFLLALLPPGAFIGMGLLIAG.

Belongs to the NqrDE/RnfAE family. The complex is composed of six subunits: RnfA, RnfB, RnfC, RnfD, RnfE and RnfG.

It is found in the cell inner membrane. In terms of biological role, part of a membrane-bound complex that couples electron transfer with translocation of ions across the membrane. The chain is Ion-translocating oxidoreductase complex subunit E from Shewanella denitrificans (strain OS217 / ATCC BAA-1090 / DSM 15013).